The primary structure comprises 443 residues: 23S rRNA (uracil(1939)-C(5))-methyltransferase RlmD (443 aa).

The region spanning 10–68 (RVTTKQTLTVTVNSLDPFGQGVAHHQGKAIFIPGALPGEQAEIELTEQKRQYSRGKLKR) is the TRAM domain. [4Fe-4S] cluster is bound by residues Cys81, Cys87, Cys90, and Cys168. 6 residues coordinate S-adenosyl-L-methionine: Gln271, Phe300, Asn305, Glu321, Asn348, and Asp369. The active-site Nucleophile is Cys395.

This sequence belongs to the class I-like SAM-binding methyltransferase superfamily. RNA M5U methyltransferase family. RlmD subfamily.

It catalyses the reaction uridine(1939) in 23S rRNA + S-adenosyl-L-methionine = 5-methyluridine(1939) in 23S rRNA + S-adenosyl-L-homocysteine + H(+). Its function is as follows. Catalyzes the formation of 5-methyl-uridine at position 1939 (m5U1939) in 23S rRNA. This chain is 23S rRNA (uracil(1939)-C(5))-methyltransferase RlmD, found in Yersinia enterocolitica serotype O:8 / biotype 1B (strain NCTC 13174 / 8081).